The chain runs to 390 residues: Succinyl-diaminopimelate desuccinylase (390 aa).

Zn(2+) is bound at residue His74. Asp76 is a catalytic residue. Asp107 lines the Zn(2+) pocket. Glu140 functions as the Proton acceptor in the catalytic mechanism. 3 residues coordinate Zn(2+): Glu141, Glu169, and His363.

It belongs to the peptidase M20A family. DapE subfamily. Homodimer. The cofactor is Zn(2+). Requires Co(2+) as cofactor.

It catalyses the reaction N-succinyl-(2S,6S)-2,6-diaminopimelate + H2O = (2S,6S)-2,6-diaminopimelate + succinate. The protein operates within amino-acid biosynthesis; L-lysine biosynthesis via DAP pathway; LL-2,6-diaminopimelate from (S)-tetrahydrodipicolinate (succinylase route): step 3/3. In terms of biological role, catalyzes the hydrolysis of N-succinyl-L,L-diaminopimelic acid (SDAP), forming succinate and LL-2,6-diaminopimelate (DAP), an intermediate involved in the bacterial biosynthesis of lysine and meso-diaminopimelic acid, an essential component of bacterial cell walls. The sequence is that of Succinyl-diaminopimelate desuccinylase from Bartonella henselae (strain ATCC 49882 / DSM 28221 / CCUG 30454 / Houston 1) (Rochalimaea henselae).